A 299-amino-acid chain; its full sequence is Acetylglutamate kinase (299 aa).

Residues 72–73, Arg94, and Asn196 each bind substrate; that span reads GG.

This sequence belongs to the acetylglutamate kinase family. ArgB subfamily.

The protein resides in the cytoplasm. The enzyme catalyses N-acetyl-L-glutamate + ATP = N-acetyl-L-glutamyl 5-phosphate + ADP. Its pathway is amino-acid biosynthesis; L-arginine biosynthesis; N(2)-acetyl-L-ornithine from L-glutamate: step 2/4. In terms of biological role, catalyzes the ATP-dependent phosphorylation of N-acetyl-L-glutamate. This chain is Acetylglutamate kinase, found in Burkholderia thailandensis (strain ATCC 700388 / DSM 13276 / CCUG 48851 / CIP 106301 / E264).